The following is a 359-amino-acid chain: S-adenosylmethionine:tRNA ribosyltransferase-isomerase (359 aa).

Belongs to the QueA family. As to quaternary structure, monomer.

It localises to the cytoplasm. The catalysed reaction is 7-aminomethyl-7-carbaguanosine(34) in tRNA + S-adenosyl-L-methionine = epoxyqueuosine(34) in tRNA + adenine + L-methionine + 2 H(+). It participates in tRNA modification; tRNA-queuosine biosynthesis. Functionally, transfers and isomerizes the ribose moiety from AdoMet to the 7-aminomethyl group of 7-deazaguanine (preQ1-tRNA) to give epoxyqueuosine (oQ-tRNA). The chain is S-adenosylmethionine:tRNA ribosyltransferase-isomerase from Synechococcus sp. (strain ATCC 27144 / PCC 6301 / SAUG 1402/1) (Anacystis nidulans).